Consider the following 508-residue polypeptide: ATP synthase subunit alpha, chloroplastic (508 aa).

172-179 (GDRQTGKT) contributes to the ATP binding site.

The protein belongs to the ATPase alpha/beta chains family. F-type ATPases have 2 components, CF(1) - the catalytic core - and CF(0) - the membrane proton channel. CF(1) has five subunits: alpha(3), beta(3), gamma(1), delta(1), epsilon(1). CF(0) has four main subunits: a, b, b' and c.

It localises to the plastid. The protein resides in the chloroplast thylakoid membrane. The enzyme catalyses ATP + H2O + 4 H(+)(in) = ADP + phosphate + 5 H(+)(out). Produces ATP from ADP in the presence of a proton gradient across the membrane. The alpha chain is a regulatory subunit. This is ATP synthase subunit alpha, chloroplastic from Angiopteris evecta (Mule's foot fern).